Reading from the N-terminus, the 1454-residue chain is Beta-1,3-glucan-binding protein (1454 aa).

The propeptide occupies 1 to 197; it reads MSFDLTTPFD…KRSLEMRMMN (197 aa). Asn-33, Asn-55, Asn-185, Asn-571, Asn-592, Asn-825, Asn-882, and Asn-1153 each carry an N-linked (GlcNAc...) asparagine glycan.

Belongs to the glycosyl hydrolase 16 family. In terms of assembly, monomer. Expressed in the hepatopancreas and secreted into the hemolymph. Expressed at lower levels in muscle, pleopod and gill tissue.

It is found in the secreted. Its function is as follows. Involved in the recognition of invading microorganisms. Binds specifically to beta-1,3-glucan and activates the prophenoloxidase cascade. The polypeptide is Beta-1,3-glucan-binding protein (Penaeus vannamei (Whiteleg shrimp)).